A 489-amino-acid polypeptide reads, in one-letter code: N-succinylglutamate 5-semialdehyde dehydrogenase (489 aa).

Position 223–228 (223–228) interacts with NAD(+); the sequence is GSSNTG. Catalysis depends on residues Glu246 and Cys280.

It belongs to the aldehyde dehydrogenase family. AstD subfamily.

The enzyme catalyses N-succinyl-L-glutamate 5-semialdehyde + NAD(+) + H2O = N-succinyl-L-glutamate + NADH + 2 H(+). Its pathway is amino-acid degradation; L-arginine degradation via AST pathway; L-glutamate and succinate from L-arginine: step 4/5. Catalyzes the NAD-dependent reduction of succinylglutamate semialdehyde into succinylglutamate. In Idiomarina loihiensis (strain ATCC BAA-735 / DSM 15497 / L2-TR), this protein is N-succinylglutamate 5-semialdehyde dehydrogenase.